Consider the following 480-residue polypeptide: UDP-glucose 6-dehydrogenase 3 (480 aa).

Residues 8–13 (GAGYVG), Asp33, Arg38, 86–90 (VNTPT), 127–128 (ST), and Glu161 contribute to the NAD(+) site. Substrate contacts are provided by residues 157 to 161 (EFLAE), 216 to 223 (KLAANAFL), and 256 to 269 (RIGPKFLNSSVGFG). Cys272 (nucleophile) is an active-site residue. Position 272-275 (272-275 (CFQK)) interacts with NAD(+). 334 to 335 (FK) contributes to the substrate binding site. Residue Arg342 participates in NAD(+) binding. Arg447 contributes to the substrate binding site.

It belongs to the UDP-glucose/GDP-mannose dehydrogenase family.

The enzyme catalyses UDP-alpha-D-glucose + 2 NAD(+) + H2O = UDP-alpha-D-glucuronate + 2 NADH + 3 H(+). It participates in nucleotide-sugar biosynthesis; UDP-alpha-D-glucuronate biosynthesis; UDP-alpha-D-glucuronate from UDP-alpha-D-glucose: step 1/1. Its activity is regulated as follows. Inhibited by UDP-xylose. Involved in the biosynthesis of UDP-glucuronic acid (UDP-GlcA), providing nucleotide sugars for cell-wall polymers. Required for the formation of cell wall ingrowths on the outer cell walls of nematode-induced syncytia. This Arabidopsis thaliana (Mouse-ear cress) protein is UDP-glucose 6-dehydrogenase 3 (UGD3).